Reading from the N-terminus, the 432-residue chain is Putative D-alanyl-D-alanine carboxypeptidase (432 aa).

A helical; Signal-anchor membrane pass occupies residues 7–25 (ATVLLTFSLSAFAVEYPVL).

Belongs to the peptidase S12 family. YfeW subfamily.

It is found in the cell inner membrane. The catalysed reaction is Preferential cleavage: (Ac)2-L-Lys-D-Ala-|-D-Ala. Also transpeptidation of peptidyl-alanyl moieties that are N-acyl substituents of D-alanine.. The chain is Putative D-alanyl-D-alanine carboxypeptidase from Salmonella schwarzengrund (strain CVM19633).